Reading from the N-terminus, the 169-residue chain is Cytochrome c-type biogenesis protein CcmE (169 aa).

Residues 1-7 are Cytoplasmic-facing; sequence MTRKQRR. A helical; Signal-anchor for type II membrane protein transmembrane segment spans residues 8 to 28; the sequence is MTIIGGSLAVLALAAALVLNA. The Periplasmic segment spans residues 29–169; sequence LRDSIVFFST…AQGNPQGAVR (141 aa). Positions 122 and 126 each coordinate heme. The segment at 143-169 is disordered; it reads DDYGGKASDGVKPAATTAQGNPQGAVR. The segment covering 158 to 169 has biased composition (polar residues); it reads TTAQGNPQGAVR.

Belongs to the CcmE/CycJ family.

The protein resides in the cell inner membrane. Functionally, heme chaperone required for the biogenesis of c-type cytochromes. Transiently binds heme delivered by CcmC and transfers the heme to apo-cytochromes in a process facilitated by CcmF and CcmH. This is Cytochrome c-type biogenesis protein CcmE from Bradyrhizobium diazoefficiens (strain JCM 10833 / BCRC 13528 / IAM 13628 / NBRC 14792 / USDA 110).